Reading from the N-terminus, the 78-residue chain is HssA/B-like protein 30 (78 aa).

Positions 1-32 are disordered; the sequence is MTLFSSITSISKTNTSSKSSVNSLSGSSLSMG.

This sequence belongs to the hssA/B family.

This chain is HssA/B-like protein 30 (hssl30), found in Dictyostelium discoideum (Social amoeba).